The sequence spans 400 residues: Enoyl-[acyl-carrier-protein] reductase [NADH] 1 (400 aa).

NAD(+)-binding positions include 48–53 (GASSGY), 74–75 (FE), 111–112 (DA), and 139–140 (LA). Tyr225 contacts substrate. Tyr235 functions as the Proton donor in the catalytic mechanism. NAD(+) is bound by residues Lys244 and 273-275 (VVT).

The protein belongs to the TER reductase family. As to quaternary structure, monomer.

It carries out the reaction a 2,3-saturated acyl-[ACP] + NAD(+) = a (2E)-enoyl-[ACP] + NADH + H(+). It functions in the pathway lipid metabolism; fatty acid biosynthesis. In terms of biological role, involved in the final reduction of the elongation cycle of fatty acid synthesis (FAS II). Catalyzes the reduction of a carbon-carbon double bond in an enoyl moiety that is covalently linked to an acyl carrier protein (ACP). The chain is Enoyl-[acyl-carrier-protein] reductase [NADH] 1 from Vibrio parahaemolyticus serotype O3:K6 (strain RIMD 2210633).